The sequence spans 321 residues: Methionyl-tRNA formyltransferase (321 aa).

113-116 (SILP) is a (6S)-5,6,7,8-tetrahydrofolate binding site.

It belongs to the Fmt family.

It carries out the reaction L-methionyl-tRNA(fMet) + (6R)-10-formyltetrahydrofolate = N-formyl-L-methionyl-tRNA(fMet) + (6S)-5,6,7,8-tetrahydrofolate + H(+). Attaches a formyl group to the free amino group of methionyl-tRNA(fMet). The formyl group appears to play a dual role in the initiator identity of N-formylmethionyl-tRNA by promoting its recognition by IF2 and preventing the misappropriation of this tRNA by the elongation apparatus. The sequence is that of Methionyl-tRNA formyltransferase from Pseudoalteromonas translucida (strain TAC 125).